The chain runs to 91 residues: Defensin-like protein 269 (91 aa).

Positions 1–25 (MAVSKTTMLIVLVAIILSCVSISNA) are cleaved as a signal peptide. 4 cysteine pairs are disulfide-bonded: cysteine 41–cysteine 82, cysteine 53–cysteine 72, cysteine 59–cysteine 77, and cysteine 63–cysteine 79.

Belongs to the DEFL family.

Its subcellular location is the secreted. In Arabidopsis thaliana (Mouse-ear cress), this protein is Defensin-like protein 269.